The following is a 470-amino-acid chain: Ribosomal protein uS12 methylthiotransferase RimO (470 aa).

The 111-residue stretch at 33 to 143 folds into the MTTase N-terminal domain; sequence NKIGFVSLGC…VLEHVHQYAP (111 aa). [4Fe-4S] cluster contacts are provided by cysteine 42, cysteine 78, cysteine 107, cysteine 175, cysteine 179, and cysteine 182. Residues 161–398 enclose the Radical SAM core domain; it reads LTPKHYAYLK…MLVQQEISAA (238 aa). One can recognise a TRAM domain in the interval 401–467; the sequence is QKRIGSTMQV…EYDLWGSVLH (67 aa).

This sequence belongs to the methylthiotransferase family. RimO subfamily. It depends on [4Fe-4S] cluster as a cofactor.

It is found in the cytoplasm. It carries out the reaction L-aspartate(89)-[ribosomal protein uS12]-hydrogen + (sulfur carrier)-SH + AH2 + 2 S-adenosyl-L-methionine = 3-methylsulfanyl-L-aspartate(89)-[ribosomal protein uS12]-hydrogen + (sulfur carrier)-H + 5'-deoxyadenosine + L-methionine + A + S-adenosyl-L-homocysteine + 2 H(+). Functionally, catalyzes the methylthiolation of an aspartic acid residue of ribosomal protein uS12. This chain is Ribosomal protein uS12 methylthiotransferase RimO, found in Vibrio cholerae serotype O1 (strain ATCC 39541 / Classical Ogawa 395 / O395).